A 452-amino-acid polypeptide reads, in one-letter code: Tripartite motif-containing protein 51G (452 aa).

Residues C15–K56 form an RING-type zinc finger. The segment at S88–T129 adopts a B box-type zinc-finger fold. Residues C93, H96, C115, and H121 each coordinate Zn(2+). A B30.2/SPRY domain is found at E269–F452.

It belongs to the TRIM/RBCC family.

The polypeptide is Tripartite motif-containing protein 51G (Homo sapiens (Human)).